A 475-amino-acid chain; its full sequence is ATP synthase subunit beta, chloroplastic (475 aa).

Position 155–162 (155–162 (GGAGVGKT)) interacts with ATP.

Belongs to the ATPase alpha/beta chains family. As to quaternary structure, F-type ATPases have 2 components, CF(1) - the catalytic core - and CF(0) - the membrane proton channel. CF(1) has five subunits: alpha(3), beta(3), gamma(1), delta(1), epsilon(1). CF(0) has four main subunits: a(1), b(1), b'(1) and c(9-12).

The protein localises to the plastid. It is found in the chloroplast thylakoid membrane. It catalyses the reaction ATP + H2O + 4 H(+)(in) = ADP + phosphate + 5 H(+)(out). Its function is as follows. Produces ATP from ADP in the presence of a proton gradient across the membrane. The catalytic sites are hosted primarily by the beta subunits. This chain is ATP synthase subunit beta, chloroplastic, found in Guillardia theta (Cryptophyte).